Here is a 421-residue protein sequence, read N- to C-terminus: MLDLKFVRTNPEVVKEALKKRNSNVSLDAFLEQEEERRKLLFEVESLKAKRNTVSEEVGRRKKHGEDAEQLILEMREVGQKVKNLEDKLGEIEQSMEAVLYEIPNIPHESVPVGADEEANVEVRTWGTPRSFDFEPLAHYEIGEKLDILDFARAGKVTGARFTFYKGLGAKLERALISFMLDRHSAKGYVEVLPPYMVHRNSMIGTGQLPKFEEDAFKVAGTDYFLIPTAEVPVTNMYREEILEAEQLPIHHCAYSACFRAEAGSAGRDTRGLIRQHQFNKVELVKFAFPENSYEELESLTRDAESILQELELPYRVMALSTGDLGFTSAKTYDLEVWLPSFNTYREISSCSNFEDFQARRANIRFRRAPKAKPEFLHTLNGSGLAIGRTVSAILENYQEADGRVRVPKALQPYLGVEYIG.

Position 229-231 (229-231 (TAE)) interacts with L-serine. 260-262 (RAE) contacts ATP. Glutamate 283 contributes to the L-serine binding site. Position 347–350 (347–350 (EISS)) interacts with ATP. Position 383 (serine 383) interacts with L-serine.

The protein belongs to the class-II aminoacyl-tRNA synthetase family. Type-1 seryl-tRNA synthetase subfamily. As to quaternary structure, homodimer. The tRNA molecule binds across the dimer.

It localises to the cytoplasm. It carries out the reaction tRNA(Ser) + L-serine + ATP = L-seryl-tRNA(Ser) + AMP + diphosphate + H(+). The catalysed reaction is tRNA(Sec) + L-serine + ATP = L-seryl-tRNA(Sec) + AMP + diphosphate + H(+). It functions in the pathway aminoacyl-tRNA biosynthesis; selenocysteinyl-tRNA(Sec) biosynthesis; L-seryl-tRNA(Sec) from L-serine and tRNA(Sec): step 1/1. In terms of biological role, catalyzes the attachment of serine to tRNA(Ser). Is also able to aminoacylate tRNA(Sec) with serine, to form the misacylated tRNA L-seryl-tRNA(Sec), which will be further converted into selenocysteinyl-tRNA(Sec). The chain is Serine--tRNA ligase from Desulfitobacterium hafniense (strain Y51).